A 380-amino-acid polypeptide reads, in one-letter code: Alcohol dehydrogenase 2 (380 aa).

The Zn(2+) site is built by Cys-48, Thr-50, His-70, Cys-100, Cys-103, Cys-106, Cys-114, and Cys-178. Thr-50 and His-70 together coordinate an alcohol. Thr-50 contributes to the NAD(+) binding site. Residues 203–208 (GLGAVG), Asp-227, Arg-232, Thr-273, Val-296, 296–298 (VGV), Phe-323, and Arg-373 contribute to the NAD(+) site.

It belongs to the zinc-containing alcohol dehydrogenase family. In terms of assembly, homodimer. Homotetramer. Zn(2+) serves as cofactor.

The protein localises to the cytoplasm. The catalysed reaction is a primary alcohol + NAD(+) = an aldehyde + NADH + H(+). It carries out the reaction a secondary alcohol + NAD(+) = a ketone + NADH + H(+). The protein is Alcohol dehydrogenase 2 (ADH2) of Solanum tuberosum (Potato).